The sequence spans 460 residues: Ribosomal protein uS12 methylthiotransferase RimO (460 aa).

Residues 16–130 (NKIHFISLGC…ILSAIESKEY (115 aa)) form the MTTase N-terminal domain. Cys-25, Cys-61, Cys-93, Cys-164, Cys-168, and Cys-171 together coordinate [4Fe-4S] cluster. A Radical SAM core domain is found at 150–382 (STPKHYAYLK…SQAQKQNVEK (233 aa)). In terms of domain architecture, TRAM spans 385–455 (QKLVGQVVEA…GYDLIGRVVK (71 aa)).

Belongs to the methylthiotransferase family. RimO subfamily. It depends on [4Fe-4S] cluster as a cofactor.

The protein resides in the cytoplasm. It catalyses the reaction L-aspartate(89)-[ribosomal protein uS12]-hydrogen + (sulfur carrier)-SH + AH2 + 2 S-adenosyl-L-methionine = 3-methylsulfanyl-L-aspartate(89)-[ribosomal protein uS12]-hydrogen + (sulfur carrier)-H + 5'-deoxyadenosine + L-methionine + A + S-adenosyl-L-homocysteine + 2 H(+). Catalyzes the methylthiolation of an aspartic acid residue of ribosomal protein uS12. This chain is Ribosomal protein uS12 methylthiotransferase RimO, found in Chlamydia felis (strain Fe/C-56) (Chlamydophila felis).